The sequence spans 507 residues: Probable cytochrome P450 6a18 (507 aa).

Cys-451 contributes to the heme binding site.

It belongs to the cytochrome P450 family. Requires heme as cofactor.

The protein resides in the endoplasmic reticulum membrane. Its subcellular location is the microsome membrane. Its function is as follows. May be involved in the metabolism of insect hormones and in the breakdown of synthetic insecticides. The protein is Probable cytochrome P450 6a18 (Cyp6a18) of Drosophila melanogaster (Fruit fly).